We begin with the raw amino-acid sequence, 314 residues long: Putative steroid dehydrogenase 1 (314 aa).

47–76 serves as a coordination point for NADP(+); the sequence is ASWAVVTGATDGIGKSYSFELAKRGFNVYI. Residue Tyr-202 is part of the active site.

The protein belongs to the short-chain dehydrogenases/reductases (SDR) family. 17-beta-HSD 3 subfamily.

In Caenorhabditis elegans, this protein is Putative steroid dehydrogenase 1 (stdh-1).